The following is a 336-amino-acid chain: UPF0324 membrane protein BR0028/BS1330_I0028 (336 aa).

11 helical membrane passes run 9-26 (ILPG…AMVL), 36-55 (RAWL…VRSL), 68-90 (FSAK…ASAV), 94-116 (GSGL…YGIG), 128-150 (LVAC…VIGA), 160-182 (AFTA…LLGL), 189-211 (ILAG…VSLL), 221-240 (LVRV…ISGN), 247-269 (PGFF…LHSL), 279-301 (AIQY…GVDI), and 313-335 (LTAI…MLGV).

This sequence belongs to the UPF0324 family.

The protein localises to the cell membrane. The sequence is that of UPF0324 membrane protein BR0028/BS1330_I0028 from Brucella suis biovar 1 (strain 1330).